Reading from the N-terminus, the 149-residue chain is Protein SprT-like (149 aa).

A SprT-like domain is found at 4–144 (TDYVKQVSLE…GLCRGKLLLV (141 aa)). Residue His-64 coordinates Zn(2+). The active site involves Glu-65. Residue His-68 participates in Zn(2+) binding.

It belongs to the SprT family. Requires Zn(2+) as cofactor.

It is found in the cytoplasm. In Streptococcus pneumoniae serotype 4 (strain ATCC BAA-334 / TIGR4), this protein is Protein SprT-like.